The primary structure comprises 467 residues: Regulatory protein NPR6 (467 aa).

One can recognise a BTB domain in the interval 27-111 (SDVTFSVEGR…LYSGQVSIVP (85 aa)). The C2HC NPR-type zinc-finger motif lies at 117 to 131 (RSNCGDRGCWHTHCT). Zn(2+)-binding residues include cysteine 120, cysteine 125, histidine 127, and cysteine 130. 4 ANK repeats span residues 247–276 (QKIR…LNLD), 277–306 (ESLA…DVNY), 311–340 (TGKT…DPNV), and 344–378 (DGIT…KLRL). The segment at 434-467 (RDIGDDNSNQREGMNLHHHHHDPSTMYHHHHHHF) is disordered. The span at 449 to 467 (LHHHHHDPSTMYHHHHHHF) shows a compositional bias: basic residues.

The protein belongs to the plant 'ANKYRIN-BTB/POZ' family. 'NOOT-BOP-COCH-like' (NBCL) subfamily. In terms of assembly, homodimer or heterodimer with BOP2. Interacts with PAN.

Its subcellular location is the cytoplasm. The protein localises to the nucleus. Its pathway is protein modification; protein ubiquitination. Functionally, may act as a substrate-specific adapter of an E3 ubiquitin-protein ligase complex (CUL3-RBX1-BTB) which mediates the ubiquitination and subsequent proteasomal degradation of target proteins. Acts redundantly with BOP2. BOP1/2 promote leaf and floral meristem fate and determinacy in a pathway targeting AP1 and AGL24. BOP1/2 act as transcriptional co-regulators through direct interaction with TGA factors, including PAN, a direct regulator of AP1. Controls lateral organ fate through positive regulation of adaxial-abaxial polarity genes ATHB-14/PHB, YAB1/FIL and YAB3, and through positive regulation of LOB domain-containing genes LOB, LBD6/AS2 and LBD36. Promotes and maintains a developmentally determinate state in leaf cells through the negative regulation of JAG, JGL and class I KNOX genes. Is also involved in nectary development, formation of normal abscission zones (AZs) and suppression of bract formation, probably by regulating the cell wall disorganization. The chain is Regulatory protein NPR6 from Arabidopsis thaliana (Mouse-ear cress).